The primary structure comprises 236 residues: MTIYLPELEQEHDASFPDIESALHDPDGLLAMGGDLTPKRLLLAYSHGIFPWYSNDDPILWWSPSIRGVFIPENYTPSKSLKKFFKKSGYSITINHATSDVISLCASTRPAEETWIMPEMIEAYQNLAKLGHCHSVEVWFNNELVGGLYGLQIGQVFCGESMFSIKTNASKIALWKFCEHFVAFGGKLIDCQMMNPHLESLGAIPMERPIFNERLQVFSAISVFENCYQPQSLSNG.

It belongs to the L/F-transferase family.

The protein localises to the cytoplasm. The enzyme catalyses N-terminal L-lysyl-[protein] + L-leucyl-tRNA(Leu) = N-terminal L-leucyl-L-lysyl-[protein] + tRNA(Leu) + H(+). It carries out the reaction N-terminal L-arginyl-[protein] + L-leucyl-tRNA(Leu) = N-terminal L-leucyl-L-arginyl-[protein] + tRNA(Leu) + H(+). It catalyses the reaction L-phenylalanyl-tRNA(Phe) + an N-terminal L-alpha-aminoacyl-[protein] = an N-terminal L-phenylalanyl-L-alpha-aminoacyl-[protein] + tRNA(Phe). Its function is as follows. Functions in the N-end rule pathway of protein degradation where it conjugates Leu, Phe and, less efficiently, Met from aminoacyl-tRNAs to the N-termini of proteins containing an N-terminal arginine or lysine. This Aliivibrio salmonicida (strain LFI1238) (Vibrio salmonicida (strain LFI1238)) protein is Leucyl/phenylalanyl-tRNA--protein transferase.